The chain runs to 205 residues: Urease accessory protein UreG (205 aa).

A GTP-binding site is contributed by Gly-10–Thr-17.

The protein belongs to the SIMIBI class G3E GTPase family. UreG subfamily. Homodimer. UreD, UreF and UreG form a complex that acts as a GTP-hydrolysis-dependent molecular chaperone, activating the urease apoprotein by helping to assemble the nickel containing metallocenter of UreC. The UreE protein probably delivers the nickel.

It is found in the cytoplasm. Its function is as follows. Facilitates the functional incorporation of the urease nickel metallocenter. This process requires GTP hydrolysis, probably effectuated by UreG. The polypeptide is Urease accessory protein UreG (Corynebacterium urealyticum (strain ATCC 43042 / DSM 7109)).